We begin with the raw amino-acid sequence, 65 residues long: Gallinacin-1 (65 aa).

Positions 1–19 are cleaved as a signal peptide; sequence MRIVYLLLPFILLLAQGAA. The propeptide occupies 20–25; it reads GSSQAL. 3 disulfides stabilise this stretch: Cys31–Cys59, Cys38–Cys53, and Cys43–Cys60.

The protein belongs to the beta-defensin family. As to expression, strong expression in the bone marrow, lung, testis. Moderate expression in the bursa and intestine. Low expression in the cloaca, gall bladder, brain and pancreas. Expressed in the vagina, ovarian stroma and the theca and granulosa layers of the ovarian follicle.

The protein localises to the secreted. The protein resides in the cytoplasmic granule. Its function is as follows. Has bactericidal activity. Potent activity against E.coli ML-35, L.monocytogenes EGD and C.albicans. The sequence is that of Gallinacin-1 (GAL1) from Gallus gallus (Chicken).